We begin with the raw amino-acid sequence, 204 residues long: Regulatory protein RecX (204 aa).

A compositionally biased stretch (polar residues) spans 1 to 22; it reads MTKSSRPQSISDSVSVAGSQGT. The interval 1–44 is disordered; the sequence is MTKSSRPQSISDSVSVAGSQGTLDDLRARVASVPEAPTREPVDS.

Belongs to the RecX family.

It localises to the cytoplasm. Its function is as follows. Modulates RecA activity. This Mycobacteroides abscessus (strain ATCC 19977 / DSM 44196 / CCUG 20993 / CIP 104536 / JCM 13569 / NCTC 13031 / TMC 1543 / L948) (Mycobacterium abscessus) protein is Regulatory protein RecX.